We begin with the raw amino-acid sequence, 617 residues long: Guanylate cyclase soluble subunit beta-2 (617 aa).

Histidine 26 serves as a coordination point for heme. The region spanning 391–519 is the Guanylate cyclase domain; sequence TILFSDVVTF…DTVNTASRME (129 aa). The span at 577–586 shows a compositional bias: basic and acidic residues; sequence RSKTPVDHKG. The tract at residues 577 to 605 is disordered; sequence RSKTPVDHKGSTQKASLPTTKLQGSVQPS. Residues 588–604 show a composition bias toward polar residues; the sequence is TQKASLPTTKLQGSVQP.

This sequence belongs to the adenylyl cyclase class-4/guanylyl cyclase family. As to quaternary structure, heterodimer of an alpha and a beta chain. Heme is required as a cofactor. Expressed in gastric signet ring cell carcinoma, but not in the normal stomach.

The protein resides in the cytoplasm. The enzyme catalyses GTP = 3',5'-cyclic GMP + diphosphate. With respect to regulation, activated by nitric oxide in the presence of magnesium or manganese ions. The chain is Guanylate cyclase soluble subunit beta-2 (GUCY1B2) from Homo sapiens (Human).